Reading from the N-terminus, the 197-residue chain is Imidazoleglycerol-phosphate dehydratase (197 aa).

This sequence belongs to the imidazoleglycerol-phosphate dehydratase family.

It is found in the cytoplasm. It carries out the reaction D-erythro-1-(imidazol-4-yl)glycerol 3-phosphate = 3-(imidazol-4-yl)-2-oxopropyl phosphate + H2O. The protein operates within amino-acid biosynthesis; L-histidine biosynthesis; L-histidine from 5-phospho-alpha-D-ribose 1-diphosphate: step 6/9. The polypeptide is Imidazoleglycerol-phosphate dehydratase (Cellvibrio japonicus (strain Ueda107) (Pseudomonas fluorescens subsp. cellulosa)).